The following is a 194-amino-acid chain: Alkyl hydroperoxide reductase AhpD (194 aa).

Cys132 functions as the Proton donor in the catalytic mechanism. An intrachain disulfide couples Cys132 to Cys135. Cys135 (cysteine sulfenic acid (-SOH) intermediate) is an active-site residue.

The protein belongs to the AhpD family.

The enzyme catalyses N(6)-[(R)-dihydrolipoyl]-L-lysyl-[lipoyl-carrier protein] + a hydroperoxide = N(6)-[(R)-lipoyl]-L-lysyl-[lipoyl-carrier protein] + an alcohol + H2O. Antioxidant protein with alkyl hydroperoxidase activity. Required for the reduction of the AhpC active site cysteine residues and for the regeneration of the AhpC enzyme activity. This is Alkyl hydroperoxide reductase AhpD from Koribacter versatilis (strain Ellin345).